The following is a 584-amino-acid chain: Phosphoinositide phospholipase C 7 (584 aa).

An EF-hand-like domain is found at 26–102 (EIKTLFDNYS…NSPLSSLEVH (77 aa)). The PI-PLC X-box domain maps to 103–248 (QDMDAPLSHY…LKKRIMISTK (146 aa)). Catalysis depends on residues His-118 and His-164. The disordered stretch occupies residues 285 to 318 (DRSVDKNDSNGDDDDDDDDDDDDDDGDDKIKKNA). A Phosphoserine modification is found at Ser-287. Residues 294–311 (NGDDDDDDDDDDDDDDGD) are compositionally biased toward acidic residues. One can recognise a PI-PLC Y-box domain in the interval 323-439 (KHLIAIEAGK…GYIKKPDLLL (117 aa)). The C2 domain occupies 433–566 (KKPDLLLKSN…QGIRAVPLRN (134 aa)).

The cofactor is Ca(2+). As to expression, expressed in leaves, roots, flowers and siliques.

It localises to the cell membrane. It catalyses the reaction a 1,2-diacyl-sn-glycero-3-phospho-(1D-myo-inositol-4,5-bisphosphate) + H2O = 1D-myo-inositol 1,4,5-trisphosphate + a 1,2-diacyl-sn-glycerol + H(+). The production of the second messenger molecules diacylglycerol (DAG) and inositol 1,4,5-trisphosphate (IP3) is mediated by activated phosphatidylinositol-specific phospholipase C enzymes. This Arabidopsis thaliana (Mouse-ear cress) protein is Phosphoinositide phospholipase C 7 (PLC7).